The primary structure comprises 288 residues: Protein PGR (288 aa).

A run of 7 helical transmembrane segments spans residues 1–21, 29–49, 91–111, 123–143, 177–197, 210–230, and 268–288; these read METS…LIAF, LDLS…TAGF, VLCN…LTGW, IVTA…GDTW, LLAA…FGLF, LLVI…DSIL, and VNFV…VYIF.

Belongs to the TMEM19 family. As to expression, expressed in the vasculature of leaves, roots, inflorescences, siliques, anther filaments and sepals. Detected primarily in the phloem tissues, including in the root ans shoot apical meristems.

It is found in the cell membrane. In terms of biological role, involved in the glucose-triggered developmental leaf growth process. The chain is Protein PGR from Arabidopsis thaliana (Mouse-ear cress).